Consider the following 376-residue polypeptide: cAMP-dependent protein kinase type I regulatory subunit (376 aa).

The segment at 1–131 (MSYMMAKTLE…ALSKAIAKNV (131 aa)) is dimerization and phosphorylation. The tract at residues 72-93 (PDDCEDLSPMPQTAAPPVRRRG) is disordered. The Pseudophosphorylation motif motif lies at 91-95 (RRGGI). Ser96 bears the Phosphoserine mark. 3',5'-cyclic AMP-binding positions include 132–247 (LFAH…FLSR), Glu197, Arg206, 250–371 (ILES…YNSF), Glu321, and Arg330.

Belongs to the cAMP-dependent kinase regulatory chain family. Tetramer, composed of 2 regulatory (R) and 2 catalytic (C) subunits. In the presence of cAMP it dissociates into 2 active monomeric C subunits and an R dimer. The pseudophosphorylation site binds to the substrate-binding region of the catalytic chain but is not phosphorylated. The physiological significance of phosphorylations by other kinases is unclear.

The polypeptide is cAMP-dependent protein kinase type I regulatory subunit (Pka-R1) (Drosophila melanogaster (Fruit fly)).